Consider the following 208-residue polypeptide: Small ribosomal subunit protein uS4 (208 aa).

The 63-residue stretch at 95–157 (RRIDNIVYRA…DSLKKLVRSN (63 aa)) folds into the S4 RNA-binding domain.

This sequence belongs to the universal ribosomal protein uS4 family. In terms of assembly, part of the 30S ribosomal subunit. Contacts protein S5. The interaction surface between S4 and S5 is involved in control of translational fidelity.

In terms of biological role, one of the primary rRNA binding proteins, it binds directly to 16S rRNA where it nucleates assembly of the body of the 30S subunit. Functionally, with S5 and S12 plays an important role in translational accuracy. The sequence is that of Small ribosomal subunit protein uS4 from Borrelia duttonii (strain Ly).